The chain runs to 174 residues: Cytochrome c-type biogenesis protein CcmE (174 aa).

Topologically, residues 1–7 are cytoplasmic; the sequence is MTRKSRR. The chain crosses the membrane as a helical; Signal-anchor for type II membrane protein span at residues 8–28; the sequence is LILIGAGLGVLALAAGLILTA. Over 29 to 174 the chain is Periplasmic; it reads LNDTIVFFRT…PAVSPARSTP (146 aa). Heme contacts are provided by His-121 and Tyr-125. A compositionally biased stretch (basic and acidic residues) spans 130 to 144; it reads VADALKKSGHWKEGE. Residues 130–174 are disordered; the sequence is VADALKKSGHWKEGEEGGPVPPAAKTPGPQSSAAPPAVSPARSTP. A compositionally biased stretch (low complexity) spans 156 to 174; that stretch reads PGPQSSAAPPAVSPARSTP.

It belongs to the CcmE/CycJ family.

Its subcellular location is the cell inner membrane. Functionally, heme chaperone required for the biogenesis of c-type cytochromes. Transiently binds heme delivered by CcmC and transfers the heme to apo-cytochromes in a process facilitated by CcmF and CcmH. This chain is Cytochrome c-type biogenesis protein CcmE, found in Azorhizobium caulinodans (strain ATCC 43989 / DSM 5975 / JCM 20966 / LMG 6465 / NBRC 14845 / NCIMB 13405 / ORS 571).